The following is a 109-amino-acid chain: MAADASQLDRLFEVIAARKGADAGSSYTAKLLAKGVPACAQKLGEEAVETVIAAVSGDGGGVVSESADLLYHWLVLMAASNTDPADVYAELERREGRSGLTEKAARGER.

The protein belongs to the PRA-PH family.

It is found in the cytoplasm. The enzyme catalyses 1-(5-phospho-beta-D-ribosyl)-ATP + H2O = 1-(5-phospho-beta-D-ribosyl)-5'-AMP + diphosphate + H(+). The protein operates within amino-acid biosynthesis; L-histidine biosynthesis; L-histidine from 5-phospho-alpha-D-ribose 1-diphosphate: step 2/9. This chain is Phosphoribosyl-ATP pyrophosphatase, found in Parvibaculum lavamentivorans (strain DS-1 / DSM 13023 / NCIMB 13966).